A 502-amino-acid chain; its full sequence is Cytochrome P450 monooxygenase prhN (502 aa).

The chain crosses the membrane as a helical span at residues serine 14–tryptophan 30. Asparagine 165 carries N-linked (GlcNAc...) asparagine glycosylation. Cysteine 443 contacts heme. An N-linked (GlcNAc...) asparagine glycan is attached at asparagine 474.

The protein belongs to the cytochrome P450 family. Heme serves as cofactor.

The protein localises to the membrane. Its pathway is secondary metabolite biosynthesis; terpenoid biosynthesis. In terms of biological role, cytochrome P450 monooxygenase; part of the gene cluster that mediates the biosynthesis of paraherquonin, a meroterpenoid with a unique, highly congested hexacyclic molecular architecture. The first step of the pathway is the synthesis of 3,5-dimethylorsellinic acid (DMOA) by the polyketide synthase prhL. Synthesis of DMOA is followed by farnesylation by the prenyltransferase prhE, methylesterification by the methyl-transferase prhM, epoxidation of the prenyl chain by the flavin-dependent monooxygenase prhF, and cyclization of the farnesyl moiety by the terpene cyclase prhH, to yield the tetracyclic intermediate, protoaustinoid A. The short chain dehydrogenase prhI then oxidizes the C-3 alcohol group of the terpene cyclase product to transform protoaustinoid A into protoaustinoid B. The FAD-binding monooxygenase prhJ catalyzes the oxidation of protoaustinoid B into preaustinoid A which is further oxidized into preaustinoid A1 by FAD-binding monooxygenase phrK. Finally, prhA leads to berkeleydione via the berkeleyone B intermediate. PrhA is a multifunctional dioxygenase that first desaturates at C5-C6 to form berkeleyone B, followed by rearrangement of the A/B-ring to form the cycloheptadiene moiety in berkeleydione. Berkeleydione serves as the key intermediate for the biosynthesis of paraherquonin as well as many other meroterpenoids. The cytochrome P450 monooxygenases prhB, prhD, and prhN, as well as the isomerase prhC, are probably involved in the late stage of paraherquonin biosynthesis, after the production of berkeleydione. Especially prhC might be a multifunctional enzyme that catalyzes the D-ring expansion via intramolecular methoxy rearrangement, as well as the hydrolysis of the expanded D-ring. The chain is Cytochrome P450 monooxygenase prhN from Penicillium brasilianum.